We begin with the raw amino-acid sequence, 87 residues long: DNA-directed RNA polymerase subunit omega (87 aa).

The protein belongs to the RNA polymerase subunit omega family. In terms of assembly, the RNAP catalytic core consists of 2 alpha, 1 beta, 1 beta' and 1 omega subunit. When a sigma factor is associated with the core the holoenzyme is formed, which can initiate transcription.

The catalysed reaction is RNA(n) + a ribonucleoside 5'-triphosphate = RNA(n+1) + diphosphate. Its function is as follows. Promotes RNA polymerase assembly. Latches the N- and C-terminal regions of the beta' subunit thereby facilitating its interaction with the beta and alpha subunits. This is DNA-directed RNA polymerase subunit omega from Pseudomonas fluorescens (strain ATCC BAA-477 / NRRL B-23932 / Pf-5).